A 217-amino-acid polypeptide reads, in one-letter code: Transmembrane protein 247 (217 aa).

The span at 1-10 shows a compositional bias: basic and acidic residues; sequence MATEDREMME. Residues 1 to 87 form a disordered region; that stretch reads MATEDREMME…GPATTKGQAG (87 aa). The stretch at 109-154 forms a coiled coil; it reads RERDAEMELEKVRMEFELKRLKYLHEENERQRQHEEVMEQLQQQAT. Helical transmembrane passes span 165–185 and 192–212; these read LLLP…IHII and IFFL…LCLI.

It is found in the membrane. This is Transmembrane protein 247 from Bos taurus (Bovine).